A 2035-amino-acid chain; its full sequence is Ral GTPase-activating protein subunit alpha-1 (2035 aa).

Disordered regions lie at residues 343-384 (LVSR…SSLC) and 477-496 (DGEK…VRNS). The span at 345 to 365 (SREESKNDTVDKVDKSAEPEQ) shows a compositional bias: basic and acidic residues. Composition is skewed to polar residues over residues 366-384 (SHSN…SSLC) and 486-496 (GTSTSEHVRNS). Phosphoserine occurs at positions 710 and 720. The disordered stretch occupies residues 714–752 (SFSRGWSRDQPGQAPMRQRSATTTGSPGTEKARSIVRQK). Position 753 is a phosphothreonine (T753). S772 bears the Phosphoserine mark. A Phosphothreonine modification is found at T777. The residue at position 796 (S796) is a Phosphoserine. Residues 807-817 (ERAKVNKEDTS) show a composition bias toward basic and acidic residues. 2 disordered regions span residues 807-834 (ERAK…SANV) and 848-911 (SGNA…SHSD). Polar residues-rich tracts occupy residues 824-833 (NSETGGNSAN) and 849-862 (GNAS…SSPG). Residues S859, S860, and S863 each carry the phosphoserine modification. Positions 894-911 (SPASAGSSDLMSSDSHSD) are enriched in low complexity. Phosphoserine occurs at positions 985, 989, 993, and 999. Residues 986 to 1008 (ESASPVHSALGSRSQTPSPSTLS) are compositionally biased toward polar residues. Positions 986-1011 (ESASPVHSALGSRSQTPSPSTLSRAH) are disordered. T1001 carries the phosphothreonine modification. S1003 and S1477 each carry phosphoserine. The segment at 1326–2035 (FTNKTVAHVA…YHHFPADADH (710 aa)) is minimal domain that binds to TCF3/E12. The stretch at 1713-1748 (SEKQENDVINAILKQYTEEKEFVEKHFNDLNMKASE) forms a coiled coil. The Rap-GAP domain occupies 1795-2003 (LRNLDSRQCR…EERARYLQTI (209 aa)).

As to quaternary structure, component of the heterodimeric RalGAP1 complex with RALGAPB. Heterodimerization is required for activity. Interacts with the HLH region of TCF3/isoform E12. As to expression, expressed during embryogenesis. Expressed in the adult brain, particularly in neurons of the cortex and hippocampus.

The protein localises to the cytoplasm. It is found in the nucleus. In terms of biological role, catalytic subunit of the heterodimeric RalGAP1 complex which acts as a GTPase activator for the Ras-like small GTPases RALA and RALB. May interact with the HLH region of TCF3/isoform E12. The sequence is that of Ral GTPase-activating protein subunit alpha-1 (Ralgapa1) from Mus musculus (Mouse).